The primary structure comprises 644 residues: Coiled-coil domain-containing protein 22 homolog (644 aa).

Residues 316 to 341 (DEQKAAAMAGLSESGPPKMDTEEELQ) form a disordered region. 3 coiled-coil regions span residues 333 to 383 (KMDT…NEQV), 409 to 486 (DAEN…GKDD), and 592 to 644 (GVIM…LKSS).

Belongs to the CCDC22 family.

The protein is Coiled-coil domain-containing protein 22 homolog of Nematostella vectensis (Starlet sea anemone).